The following is a 419-amino-acid chain: L-rhamnose isomerase (419 aa).

Positions 262, 294, and 296 each coordinate Mn(2+).

This sequence belongs to the rhamnose isomerase family. As to quaternary structure, homotetramer. Mn(2+) serves as cofactor.

It is found in the cytoplasm. It carries out the reaction L-rhamnopyranose = L-rhamnulose. It functions in the pathway carbohydrate degradation; L-rhamnose degradation; glycerone phosphate from L-rhamnose: step 1/3. Its function is as follows. Catalyzes the interconversion of L-rhamnose and L-rhamnulose. In Shigella boydii serotype 4 (strain Sb227), this protein is L-rhamnose isomerase.